A 257-amino-acid polypeptide reads, in one-letter code: Fructose-2,6-bisphosphatase TIGAR B (257 aa).

The active-site Tele-phosphohistidine intermediate is histidine 11. Glutamate 89 (proton donor/acceptor) is an active-site residue.

The protein belongs to the phosphoglycerate mutase family.

Its subcellular location is the cytoplasm. It is found in the nucleus. It localises to the mitochondrion. The enzyme catalyses beta-D-fructose 2,6-bisphosphate + H2O = beta-D-fructose 6-phosphate + phosphate. Functionally, fructose-bisphosphatase hydrolyzing fructose-2,6-bisphosphate as well as fructose-1,6-bisphosphate. Acts as a negative regulator of glycolysis by lowering intracellular levels of fructose-2,6-bisphosphate in a p53/TP53-dependent manner, resulting in the pentose phosphate pathway (PPP) activation and NADPH production. Contributes to the generation of reduced glutathione to cause a decrease in intracellular reactive oxygen species (ROS) content, correlating with its ability to protect cells from oxidative or metabolic stress-induced cell death. May play a role in mitophagy inhibition. The polypeptide is Fructose-2,6-bisphosphatase TIGAR B (Danio rerio (Zebrafish)).